The sequence spans 431 residues: Enolase (431 aa).

(2R)-2-phosphoglycerate is bound at residue Gln-167. Residue Glu-209 is the Proton donor of the active site. Mg(2+)-binding residues include Asp-246, Glu-290, and Asp-317. Residues Lys-342, Arg-371, Ser-372, and Lys-393 each coordinate (2R)-2-phosphoglycerate. Catalysis depends on Lys-342, which acts as the Proton acceptor.

The protein belongs to the enolase family. As to quaternary structure, component of the RNA degradosome, a multiprotein complex involved in RNA processing and mRNA degradation. It depends on Mg(2+) as a cofactor.

The protein resides in the cytoplasm. The protein localises to the secreted. It localises to the cell surface. It carries out the reaction (2R)-2-phosphoglycerate = phosphoenolpyruvate + H2O. It functions in the pathway carbohydrate degradation; glycolysis; pyruvate from D-glyceraldehyde 3-phosphate: step 4/5. Functionally, catalyzes the reversible conversion of 2-phosphoglycerate (2-PG) into phosphoenolpyruvate (PEP). It is essential for the degradation of carbohydrates via glycolysis. The protein is Enolase of Enterobacter sp. (strain 638).